The following is a 621-amino-acid chain: Autonomous transposable element EN-1 mosaic protein (621 aa).

Disordered regions lie at residues 1 to 119 (MFRM…PPRR), 428 to 447 (YTRRSNFSAGSNRPRRPSAR), 498 to 530 (QQPPIITHPVSGQSSDRSTAAADGSQGSATSVQ), and 549 to 621 (RQPG…PPTE). Polar residues-rich tracts occupy residues 27-39 (EGTTTSRSRQEQL) and 47-61 (RGSSGPSNTEGTTSR). The segment covering 82–102 (AAVDAEAEEAAAELDDGEETS) has biased composition (acidic residues). Residues 570-594 (PPRGQSQSPGLPSHSPGSGSGSHHA) show a composition bias toward low complexity.

Its function is as follows. This protein has most probably three functions; the mutator (M) function, for excision and transposition; the suppressor (S) function, which inhibits residual gene activity of certain alleles in which inhibitor elements are integrated; an activator (A) function is proposed, because inactive SPM can be activated by a second SPM. The polypeptide is Autonomous transposable element EN-1 mosaic protein (Zea mays (Maize)).